Consider the following 453-residue polypeptide: Alpha-glucosidase (453 aa).

Threonine 3–aspartate 69 provides a ligand contact to NAD(+). Residue asparagine 149 participates in substrate binding. Cysteine 171 serves as a coordination point for Mn(2+). The active-site Proton donor is the histidine 172. Histidine 201 is a binding site for Mn(2+).

As to quaternary structure, homotetramer. Requires Mn(2+) as cofactor. The cofactor is Co(2+). It depends on Ca(2+) as a cofactor. Fe(2+) serves as cofactor. Mg(2+) is required as a cofactor. Requires Sr(2+) as cofactor. The cofactor is Ni(2+). It depends on NAD(+) as a cofactor.

The catalysed reaction is Hydrolysis of terminal, non-reducing (1-&gt;4)-linked alpha-D-glucose residues with release of alpha-D-glucose.. It functions in the pathway glycan degradation; palatinose degradation. With respect to regulation, is inhibited by EDTA in vitro. Alpha-glucosidase with broad specificity. Hydrolyzes maltose, palatinose, maltulose, trehalose, trehalulose, turanose, leucrose, sucrose and maltitol. Is not active against alpha-galactosides, e.g. melibiose, and alpha-mannosides. Shows an obligate requirement for an O-alpha-glycosidic linkage, since it is not able to cleave beta-glycosidic bonds (cellobiose, gentiobiose, lactose, sophorose or laminaribiose). Cannot hydrolyze phosphorylated alpha-glucosides derivatives. Seems to be involved in the degradation of palatinose, a sucrose isomer that is formed as a reserve material under conditions of excess carbon availability, sequestered in a form unavailable to competitors such as fungi or the host plant, and whose consumption appears to be postponed until the preferentially metabolized carbon source (e.g. sucrose) is depleted. The protein is Alpha-glucosidase (palH) of Erwinia rhapontici (Pectobacterium rhapontici).